The primary structure comprises 228 residues: UPF0173 metal-dependent hydrolase lin1612 (228 aa).

It belongs to the UPF0173 family.

This chain is UPF0173 metal-dependent hydrolase lin1612, found in Listeria innocua serovar 6a (strain ATCC BAA-680 / CLIP 11262).